The following is a 385-amino-acid chain: Putative glutamate--cysteine ligase 2 (385 aa).

Belongs to the glutamate--cysteine ligase type 2 family. YbdK subfamily.

The enzyme catalyses L-cysteine + L-glutamate + ATP = gamma-L-glutamyl-L-cysteine + ADP + phosphate + H(+). ATP-dependent carboxylate-amine ligase which exhibits weak glutamate--cysteine ligase activity. This chain is Putative glutamate--cysteine ligase 2, found in Solibacter usitatus (strain Ellin6076).